A 1088-amino-acid chain; its full sequence is Adenylate-forming reductase Nps10 (1088 aa).

Positions 1–22 are disordered; it reads MSSVSIQIPLPTPPPTQAHNSQ. The interval 38 to 451 is adenylation (A) domain; it reads FDWHSKNSPN…KIFGRTDDQI (414 aa). AMP-binding positions include H261, 357–358, T362, and 443–446; these read NL and IFGR. The Carrier domain occupies 586 to 668; it reads AWDSAKTLGF…SLASFVSSVA (83 aa). An O-(pantetheine 4'-phosphoryl)serine modification is found at S621. The tract at residues 712–951 is reductase (R) domain; that stretch reads LTGSTGALGS…IPVNVAAAAI (240 aa). Residues 716-719, 804-806, Y875, and K879 contribute to the NADP(+) site; these read TGAL and NAW.

This sequence belongs to the adenylate-forming reductase family.

Its function is as follows. Adenylate-forming reductase, a natural product biosynthesis enzyme that resembles non-ribosomal peptide synthetases, yet serves to modify one substrate, rather than to condense two or more building blocks. The A-domain preferentially accepts phenylpyruvic acid and benzoic acid as substrate. The natural product of the enzyme is not yet known. The sequence is that of Adenylate-forming reductase Nps10 from Heterobasidion annosum (Root rot fungus).